The sequence spans 361 residues: 5-formaminoimidazole-4-carboxamide-1-(beta)-D-ribofuranosyl 5'-monophosphate synthetase (361 aa).

5-amino-1-(5-phospho-beta-D-ribosyl)imidazole-4-carboxamide contacts are provided by His-27 and Ser-94. One can recognise an ATP-grasp domain in the interval Arg-116–Lys-348. Residues Pro-146–Cys-208 and Glu-230 contribute to the ATP site. Asn-258 contributes to the 5-amino-1-(5-phospho-beta-D-ribosyl)imidazole-4-carboxamide binding site. Residues Gln-297 and Glu-310 each coordinate Mg(2+).

Belongs to the phosphohexose mutase family. It depends on Mg(2+) as a cofactor. The cofactor is Mn(2+).

It carries out the reaction 5-amino-1-(5-phospho-beta-D-ribosyl)imidazole-4-carboxamide + formate + ATP = 5-formamido-1-(5-phospho-D-ribosyl)imidazole-4-carboxamide + ADP + phosphate. It functions in the pathway purine metabolism; IMP biosynthesis via de novo pathway; 5-formamido-1-(5-phospho-D-ribosyl)imidazole-4-carboxamide from 5-amino-1-(5-phospho-D-ribosyl)imidazole-4-carboxamide (formate route): step 1/1. Functionally, catalyzes the ATP- and formate-dependent formylation of 5-aminoimidazole-4-carboxamide-1-beta-d-ribofuranosyl 5'-monophosphate (AICAR) to 5-formaminoimidazole-4-carboxamide-1-beta-d-ribofuranosyl 5'-monophosphate (FAICAR) in the absence of folates. This is 5-formaminoimidazole-4-carboxamide-1-(beta)-D-ribofuranosyl 5'-monophosphate synthetase from Methanococcus maripaludis (strain C6 / ATCC BAA-1332).